We begin with the raw amino-acid sequence, 422 residues long: Ribosomal RNA small subunit methyltransferase B (422 aa).

Residues 254 to 260 (CAAPGGK), aspartate 277, aspartate 303, and aspartate 322 contribute to the S-adenosyl-L-methionine site. Catalysis depends on cysteine 375, which acts as the Nucleophile.

Belongs to the class I-like SAM-binding methyltransferase superfamily. RsmB/NOP family.

The protein resides in the cytoplasm. It catalyses the reaction cytidine(967) in 16S rRNA + S-adenosyl-L-methionine = 5-methylcytidine(967) in 16S rRNA + S-adenosyl-L-homocysteine + H(+). Specifically methylates the cytosine at position 967 (m5C967) of 16S rRNA. The polypeptide is Ribosomal RNA small subunit methyltransferase B (Proteus mirabilis (strain HI4320)).